We begin with the raw amino-acid sequence, 447 residues long: Methyl-coenzyme M reductase II subunit beta (447 aa).

Tyr368 lines the coenzyme M pocket. Residue Gly370 coordinates coenzyme B.

It belongs to the methyl-coenzyme M reductase beta subunit family. MCR is a hexamer of two alpha, two beta, and two gamma chains, forming a dimer of heterotrimers. Coenzyme F430 serves as cofactor.

It catalyses the reaction coenzyme B + methyl-coenzyme M = methane + coenzyme M-coenzyme B heterodisulfide. Its pathway is one-carbon metabolism; methyl-coenzyme M reduction; methane from methyl-coenzyme M: step 1/1. In terms of biological role, component of the methyl-coenzyme M reductase (MCR) I that catalyzes the reductive cleavage of methyl-coenzyme M (CoM-S-CH3 or 2-(methylthio)ethanesulfonate) using coenzyme B (CoB or 7-mercaptoheptanoylthreonine phosphate) as reductant which results in the production of methane and the mixed heterodisulfide of CoB and CoM (CoM-S-S-CoB). This is the final step in methanogenesis. The polypeptide is Methyl-coenzyme M reductase II subunit beta (mrtB) (Methanocaldococcus jannaschii (strain ATCC 43067 / DSM 2661 / JAL-1 / JCM 10045 / NBRC 100440) (Methanococcus jannaschii)).